A 154-amino-acid polypeptide reads, in one-letter code: Aspartate carbamoyltransferase regulatory chain (154 aa).

Cysteine 109, cysteine 114, cysteine 138, and cysteine 141 together coordinate Zn(2+).

This sequence belongs to the PyrI family. In terms of assembly, contains catalytic and regulatory chains. The cofactor is Zn(2+).

Involved in allosteric regulation of aspartate carbamoyltransferase. The polypeptide is Aspartate carbamoyltransferase regulatory chain (Tolumonas auensis (strain DSM 9187 / NBRC 110442 / TA 4)).